A 208-amino-acid polypeptide reads, in one-letter code: Large ribosomal subunit protein uL3 (208 aa).

Residues 134–159 (SKFHREAGSTGHCTTPGRSFKNTTMP) form a disordered region. Positions 144–158 (GHCTTPGRSFKNTTM) are enriched in polar residues.

The protein belongs to the universal ribosomal protein uL3 family. Part of the 50S ribosomal subunit. Forms a cluster with proteins L14 and L19.

One of the primary rRNA binding proteins, it binds directly near the 3'-end of the 23S rRNA, where it nucleates assembly of the 50S subunit. This Treponema denticola (strain ATCC 35405 / DSM 14222 / CIP 103919 / JCM 8153 / KCTC 15104) protein is Large ribosomal subunit protein uL3.